The sequence spans 209 residues: Glutathione S-transferase 2 (209 aa).

In terms of domain architecture, GST N-terminal spans 1–81; the sequence is MLDFYYLPGS…YLCDQYGDED (81 aa). Residues S10, 51-53, and 65-67 contribute to the glutathione site; these read RTI and ESR. The GST C-terminal domain occupies 88–209; the sequence is DTIQRAIVNQ…SGAKEFLTYK (122 aa).

This sequence belongs to the GST superfamily. Theta family. As to quaternary structure, homodimer.

The catalysed reaction is RX + glutathione = an S-substituted glutathione + a halide anion + H(+). Functionally, conjugation of reduced glutathione to a wide number of exogenous and endogenous hydrophobic electrophiles. The chain is Glutathione S-transferase 2 (GstD2) from Anopheles gambiae (African malaria mosquito).